A 178-amino-acid chain; its full sequence is Stage V sporulation protein T (178 aa).

One can recognise a SpoVT-AbrB domain in the interval 5 to 51; the sequence is GIVRRIDDLGRVVIPKEIRRTLRIREGDPLEIFVDRDGEVILKKYSP. Residues 56-178 form a GAF-like region; that stretch reads GDFAKEYADA…AGFLARQMEQ (123 aa).

To B.subtilis AbrB and Abh. As to quaternary structure, homotetramer. Two monomers dimerize via their N-terminal swapped-hairpin domains. These dimers further associate into tetramers through helical interactions between their C-terminal GAF-like domains.

Functionally, transcriptional factor that positively regulates or negatively the expression of a large number of forespore-specific sigma G-dependent genes. May provide a mechanism of feedback control that is important for forespore development. SpoVT levels during spore formation have a major impact on the germination and the resistance of the resultant spores. The protein is Stage V sporulation protein T of Bacillus subtilis (strain 168).